A 205-amino-acid chain; its full sequence is ATP-dependent Clp protease proteolytic subunit (205 aa).

Catalysis depends on Ser98, which acts as the Nucleophile. His123 is a catalytic residue.

It belongs to the peptidase S14 family. As to quaternary structure, fourteen ClpP subunits assemble into 2 heptameric rings which stack back to back to give a disk-like structure with a central cavity, resembling the structure of eukaryotic proteasomes.

The protein localises to the cytoplasm. It carries out the reaction Hydrolysis of proteins to small peptides in the presence of ATP and magnesium. alpha-casein is the usual test substrate. In the absence of ATP, only oligopeptides shorter than five residues are hydrolyzed (such as succinyl-Leu-Tyr-|-NHMec, and Leu-Tyr-Leu-|-Tyr-Trp, in which cleavage of the -Tyr-|-Leu- and -Tyr-|-Trp bonds also occurs).. Cleaves peptides in various proteins in a process that requires ATP hydrolysis. Has a chymotrypsin-like activity. Plays a major role in the degradation of misfolded proteins. This Desulforapulum autotrophicum (strain ATCC 43914 / DSM 3382 / VKM B-1955 / HRM2) (Desulfobacterium autotrophicum) protein is ATP-dependent Clp protease proteolytic subunit.